The sequence spans 41 residues: Large ribosomal subunit protein bL36 (41 aa).

This sequence belongs to the bacterial ribosomal protein bL36 family.

This chain is Large ribosomal subunit protein bL36, found in Mesorhizobium japonicum (strain LMG 29417 / CECT 9101 / MAFF 303099) (Mesorhizobium loti (strain MAFF 303099)).